The primary structure comprises 461 residues: Putative aldehyde dehydrogenase FUS7 (461 aa).

220–225 is a binding site for NAD(+); sequence GSTTTG. Active-site residues include glutamate 242 and cysteine 276.

Belongs to the aldehyde dehydrogenase family.

It catalyses the reaction an aldehyde + NAD(+) + H2O = a carboxylate + NADH + 2 H(+). Functionally, putative aldehyde dehydrogenase; part of the gene cluster that mediates the biosynthesis of the mycotoxin fusarin C. Within the cluster, FUS1, FUS2, FUS8 and FUS9 are sufficient for fusarin production. The other FUS cluster members are not essential for fusarin C biosynthesis. This is Putative aldehyde dehydrogenase FUS7 from Gibberella fujikuroi (strain CBS 195.34 / IMI 58289 / NRRL A-6831) (Bakanae and foot rot disease fungus).